The following is a 375-amino-acid chain: MLGCFFFFFIQYKVQVEIFVFKVHYLREDTPFPKMVVDVDALANEAIGLLDQCKDDNYRVCILIVGPPGSGKSTVAQDLSRQINHRFDEYRLQGNQKSAHGGTRSRASDVALASDVPEITTPLSEELAFNGGILPKYVEDVNFQPVKRRLENGDLQILGRGGLPNAFTISNDVEPDEESSFAQIVPMDGFHLSRQCLSSFQNPQEAHKRRGSPPTFDSNNFAQLCKTLAQTCTIKPGSCDAKSCFEFMAKTYDPHFPCIKIPGFDHSLKDPTPDQFCLNGHTRIVILEGLYLLYDKENWQRVHEILQNTGSLLVWYIDIEDHVIEERVAKRHFNSGLADSVEQGRLKFQGNDLLNARLIRKNLVQSGKVVTLRND.

66-74 (GPPGSGKST) lines the ATP pocket.

This sequence belongs to the YFH7 family.

Its function is as follows. ATP-dependent kinase that could be involved in endoplasmic reticulum membrane assembly. The protein is ATP-dependent kinase YFH7 (YFH7) of Zygosaccharomyces rouxii (strain ATCC 2623 / CBS 732 / NBRC 1130 / NCYC 568 / NRRL Y-229).